The chain runs to 61 residues: Metallothionein-1E (61 aa).

Residue M1 is modified to N-acetylmethionine. The tract at residues 1 to 29 (MDPNCSCATGGSCTCAGSCKCKECKCTSC) is beta. 20 residues coordinate a divalent metal cation: C5, C7, C13, C15, C19, C21, C24, C26, C29, C33, C34, C36, C37, C41, C44, C48, C50, C57, C59, and C60. The tract at residues 30 to 61 (KKSCCSCCPVGCAKCAQGCVCKGASEKCSCCA) is alpha.

Belongs to the metallothionein superfamily. Type 1 family. In terms of assembly, monomer.

Functionally, metallothioneins have a high content of cysteine residues that bind various heavy metals; these proteins are transcriptionally regulated by both heavy metals and glucocorticoids. The sequence is that of Metallothionein-1E (MT1E) from Homo sapiens (Human).